The following is a 305-amino-acid chain: Oxygen-dependent coproporphyrinogen-III oxidase (305 aa).

Ser-93 is a substrate binding site. A divalent metal cation is bound by residues His-97 and His-107. The Proton donor role is filled by His-107. 109–111 (NVR) is a binding site for substrate. Positions 146 and 176 each coordinate a divalent metal cation. Residues 241-276 (YVEFNLVFDRGTLFGLQSGGRTESILMSLPPQVRWG) are important for dimerization. 259–261 (GGR) is a binding site for substrate.

The protein belongs to the aerobic coproporphyrinogen-III oxidase family. As to quaternary structure, homodimer. A divalent metal cation serves as cofactor.

It is found in the cytoplasm. The catalysed reaction is coproporphyrinogen III + O2 + 2 H(+) = protoporphyrinogen IX + 2 CO2 + 2 H2O. It functions in the pathway porphyrin-containing compound metabolism; protoporphyrin-IX biosynthesis; protoporphyrinogen-IX from coproporphyrinogen-III (O2 route): step 1/1. Involved in the heme biosynthesis. Catalyzes the aerobic oxidative decarboxylation of propionate groups of rings A and B of coproporphyrinogen-III to yield the vinyl groups in protoporphyrinogen-IX. The sequence is that of Oxygen-dependent coproporphyrinogen-III oxidase from Pseudomonas paraeruginosa (strain DSM 24068 / PA7) (Pseudomonas aeruginosa (strain PA7)).